A 230-amino-acid chain; its full sequence is C-reactive protein (230 aa).

The first 19 residues, 1-19 (MEKLLWCLLITISFSQAFG), serve as a signal peptide directing secretion. The 200-residue stretch at 24–223 (SKQAFVFPGV…DVFIKPQLWP (200 aa)) folds into the Pentraxin (PTX) domain. Cysteines 55 and 114 form a disulfide. N78 is a binding site for Ca(2+). N147 carries an N-linked (GlcNAc...) asparagine glycan. Residues E155, Q156, D157, and Q167 each coordinate Ca(2+). A disulfide bridge links C227 with C228.

This sequence belongs to the pentraxin family. In terms of assembly, homopentamer; disulfide-linked. Pentraxin (or pentaxin) have a discoid arrangement of 5 non-covalently bound subunits. Two of the five chains form a dimer linked by two interchain disulfide bonds located in the C-terminal heptapeptide and specific to rat CRP. Interacts with FCN1; may regulate monocyte activation by FCN1. The cofactor is Ca(2+). In terms of processing, the last two cysteines are involved either in interchain disulfide bonds or in an intrachain bond. As to expression, found in plasma.

Its subcellular location is the secreted. Functionally, displays several functions associated with host defense: it promotes agglutination, bacterial capsular swelling, phagocytosis and complement fixation through its calcium-dependent binding to phosphorylcholine. Can interact with DNA and histones and may scavenge nuclear material released from damaged circulating cells. In Rattus norvegicus (Rat), this protein is C-reactive protein (Crp).